The sequence spans 248 residues: ATP synthase subunit a, chloroplastic (248 aa).

Transmembrane regions (helical) follow at residues 38 to 58 (QVLL…TIAV), 96 to 116 (VPFI…GALL), 135 to 155 (INTT…AGLT), 200 to 220 (LVVA…VMFL), and 221 to 241 (GLFT…AYIG).

This sequence belongs to the ATPase A chain family. As to quaternary structure, F-type ATPases have 2 components, CF(1) - the catalytic core - and CF(0) - the membrane proton channel. CF(1) has five subunits: alpha(3), beta(3), gamma(1), delta(1), epsilon(1). CF(0) has four main subunits: a, b, b' and c.

It is found in the plastid. The protein localises to the chloroplast thylakoid membrane. In terms of biological role, key component of the proton channel; it plays a direct role in the translocation of protons across the membrane. The sequence is that of ATP synthase subunit a, chloroplastic from Pinus thunbergii (Japanese black pine).